The sequence spans 358 residues: UDP-N-acetylglucosamine--N-acetylmuramyl-(pentapeptide) pyrophosphoryl-undecaprenol N-acetylglucosamine transferase (358 aa).

Residues Thr-11–Gly-13, Asn-120, Arg-161, Ser-188, and Gln-282 each bind UDP-N-acetyl-alpha-D-glucosamine.

It belongs to the glycosyltransferase 28 family. MurG subfamily.

The protein localises to the cell inner membrane. The catalysed reaction is di-trans,octa-cis-undecaprenyl diphospho-N-acetyl-alpha-D-muramoyl-L-alanyl-D-glutamyl-meso-2,6-diaminopimeloyl-D-alanyl-D-alanine + UDP-N-acetyl-alpha-D-glucosamine = di-trans,octa-cis-undecaprenyl diphospho-[N-acetyl-alpha-D-glucosaminyl-(1-&gt;4)]-N-acetyl-alpha-D-muramoyl-L-alanyl-D-glutamyl-meso-2,6-diaminopimeloyl-D-alanyl-D-alanine + UDP + H(+). Its pathway is cell wall biogenesis; peptidoglycan biosynthesis. In terms of biological role, cell wall formation. Catalyzes the transfer of a GlcNAc subunit on undecaprenyl-pyrophosphoryl-MurNAc-pentapeptide (lipid intermediate I) to form undecaprenyl-pyrophosphoryl-MurNAc-(pentapeptide)GlcNAc (lipid intermediate II). This Synechococcus sp. (strain CC9311) protein is UDP-N-acetylglucosamine--N-acetylmuramyl-(pentapeptide) pyrophosphoryl-undecaprenol N-acetylglucosamine transferase.